The sequence spans 702 residues: Methionine--tRNA ligase (702 aa).

Positions 23–33 match the 'HIGH' region motif; it reads PYANGPLHLGH. The Zn(2+) site is built by cysteine 154, cysteine 157, cysteine 167, and cysteine 170. Residues 341-345 carry the 'KMSKS' region motif; it reads KMSKS. Residue lysine 344 coordinates ATP. Residues 562–593 form a disordered region; that stretch reads LAPPPASAKQQNASMSNTAPPPTAEEPETTAP. Positions 569-578 are enriched in polar residues; that stretch reads AKQQNASMSN. The tRNA-binding domain occupies 599-702; sequence DFAKLDLRIG…SSAQPGMPVR (104 aa).

The protein belongs to the class-I aminoacyl-tRNA synthetase family. MetG type 1 subfamily. Homodimer. Zn(2+) is required as a cofactor.

It localises to the cytoplasm. The enzyme catalyses tRNA(Met) + L-methionine + ATP = L-methionyl-tRNA(Met) + AMP + diphosphate. In terms of biological role, is required not only for elongation of protein synthesis but also for the initiation of all mRNA translation through initiator tRNA(fMet) aminoacylation. This Xylella fastidiosa (strain M12) protein is Methionine--tRNA ligase.